The following is a 969-amino-acid chain: Surface protein P113 (969 aa).

A signal peptide spans 1-22 (MKIPFFILHILLLQFLLCLIRC). An N-linked (GlcNAc...) asparagine glycan is attached at Asn-207. The interval 223-328 (IGDESTDSSS…TDTLVNNKEN (106 aa)) is disordered. Residues 229–241 (DSSSMEIQDSTSN) are compositionally biased toward polar residues. N-linked (GlcNAc...) asparagine glycosylation is present at Asn-268. Basic and acidic residues predominate over residues 300–311 (KNEDNKDLEHGS). Low complexity predominate over residues 312-325 (SNDVNNNTDTLVNN). Asn-317, Asn-360, Asn-661, and Asn-697 each carry an N-linked (GlcNAc...) asparagine glycan. Over residues 688–705 (SSNFNIFDSNNTDQNNEQ) the composition is skewed to polar residues. The interval 688 to 947 (SSNFNIFDSN…NETNKTDNGS (260 aa)) is disordered. A compositionally biased stretch (low complexity) spans 713 to 727 (QLLNNNNDDVLSESN). Basic and acidic residues predominate over residues 728-749 (NENKEKTSDDATHKETQEKSDQ). Asn-779 carries N-linked (GlcNAc...) asparagine glycosylation. The segment covering 798-811 (EGTEELQQNDEDAE) has biased composition (acidic residues). A compositionally biased stretch (basic and acidic residues) spans 812 to 822 (SLTKENSKSEE). Positions 823–841 (QENEDSTDAEAIDKEEVET) are enriched in acidic residues. The span at 842 to 854 (EEKGKDEQKKDEQ) shows a compositional bias: basic and acidic residues. The span at 855 to 864 (KEQDEEEDGE) shows a compositional bias: acidic residues. Asn-876 is a glycosylation site (N-linked (GlcNAc...) asparagine). A compositionally biased stretch (basic and acidic residues) spans 883–896 (EENKNEVKGEEHLQ). The segment covering 897–907 (GSEQSIEASES) has biased composition (low complexity). Residues 908–917 (SQKDETKETE) are compositionally biased toward basic and acidic residues. Over residues 918–936 (DKEEYVNANDDESSEEDTT) the composition is skewed to acidic residues. Residues 937–947 (PNETNKTDNGS) are compositionally biased toward polar residues. N-linked (GlcNAc...) asparagine glycosylation is found at Asn-938, Asn-941, and Asn-945. A lipid anchor (GPI-anchor amidated asparagine) is attached at Asn-945. A propeptide spans 946-969 (GSSFFFAMSNALLVILLLLFIEFL) (removed in mature form).

Forms a complex composed of RH5, P113 and human BSG/basigin; the complex bridges the merozoite and host erythrocyte membranes. Within the complex, interacts with RH5 (via N-terminus); the interaction tethers RH5 to the merozoite membrane.

It is found in the cell membrane. Its function is as follows. Membrane receptor which tethers secreted RH5 to the merozoite membrane during merozoite invasion of host erythocytes. The chain is Surface protein P113 from Plasmodium falciparum (isolate 3D7).